Here is a 301-residue protein sequence, read N- to C-terminus: uncharacterized protein (301 aa).

Disordered regions lie at residues 56–126 (ESPT…ESDL) and 149–173 (LSTE…DASS). Residues 71-82 (VQKENQKPKDLN) are compositionally biased toward basic and acidic residues. The span at 93 to 102 (KNSSGLVSQI) shows a compositional bias: polar residues. Residues 161–173 (SNTSSSSMSDASS) are compositionally biased toward low complexity.

This is an uncharacterized protein from Caenorhabditis elegans.